We begin with the raw amino-acid sequence, 249 residues long: 23S rRNA (guanosine-2'-O-)-methyltransferase RlmB (249 aa).

S-adenosyl-L-methionine-binding residues include Gly-200, Ile-220, and Leu-229.

This sequence belongs to the class IV-like SAM-binding methyltransferase superfamily. RNA methyltransferase TrmH family. RlmB subfamily.

Its subcellular location is the cytoplasm. It carries out the reaction guanosine(2251) in 23S rRNA + S-adenosyl-L-methionine = 2'-O-methylguanosine(2251) in 23S rRNA + S-adenosyl-L-homocysteine + H(+). Functionally, specifically methylates the ribose of guanosine 2251 in 23S rRNA. This is 23S rRNA (guanosine-2'-O-)-methyltransferase RlmB from Xanthomonas axonopodis pv. citri (strain 306).